We begin with the raw amino-acid sequence, 857 residues long: uncharacterized protein (857 aa).

Disordered regions lie at residues 316-339 (PPAPSLEQPENKTMPEIKEGTKEN), 484-561 (AKQP…PRTN), 619-777 (GQFP…PKPQ), and 809-836 (EQRPEREAMKRQAQQERENAVKNPSTGK). Basic and acidic residues-rich tracts occupy residues 324–339 (PENKTMPEIKEGTKEN), 518–534 (KKTEELKQSRNTAKAEE), and 630–640 (QRAESSIDKDC). Polar residues predominate over residues 683 to 700 (RTTTVQPHSHSAQPTTLR). Residues 708-725 (SSSLIASAKPAPPISSSS) show a composition bias toward low complexity. Over residues 726–738 (TGPNVTNPNQSSA) the composition is skewed to polar residues. The span at 809 to 828 (EQRPEREAMKRQAQQERENA) shows a compositional bias: basic and acidic residues.

This is an uncharacterized protein from Mus musculus (Mouse).